The primary structure comprises 148 residues: Lysozyme C-2 (148 aa).

The signal sequence occupies residues Met-1–Ala-18. A C-type lysozyme domain is found at Lys-19–Val-148. Intrachain disulfides connect Cys-24/Cys-146, Cys-48/Cys-134, Cys-83/Cys-99, and Cys-95/Cys-113. Active-site residues include Glu-53 and Asp-71.

It belongs to the glycosyl hydrolase 22 family. In terms of assembly, monomer. As to expression, expressed weakly in myeloblasts, moderately in immature macrophages, and strongly in both mature macrophages and macrophage-rich tissues.

The protein resides in the secreted. It carries out the reaction Hydrolysis of (1-&gt;4)-beta-linkages between N-acetylmuramic acid and N-acetyl-D-glucosamine residues in a peptidoglycan and between N-acetyl-D-glucosamine residues in chitodextrins.. Functionally, lysozymes have primarily a bacteriolytic function; those in tissues and body fluids are associated with the monocyte-macrophage system and enhance the activity of immunoagents. Lyz2 is active against a range of Gram-positive and Gram-negative bacteria. More effective than Lyz1 in killing Gram-negative bacteria. Lyz1 and Lyz2 are equally effective in killing Gram-positive bacteria. This is Lysozyme C-2 (Lyz2) from Mus musculus (Mouse).